A 461-amino-acid chain; its full sequence is ATP synthase subunit beta (461 aa).

151–158 serves as a coordination point for ATP; sequence GGAGVGKT.

The protein belongs to the ATPase alpha/beta chains family. In terms of assembly, F-type ATPases have 2 components, CF(1) - the catalytic core - and CF(0) - the membrane proton channel. CF(1) has five subunits: alpha(3), beta(3), gamma(1), delta(1), epsilon(1). CF(0) has three main subunits: a(1), b(2) and c(9-12). The alpha and beta chains form an alternating ring which encloses part of the gamma chain. CF(1) is attached to CF(0) by a central stalk formed by the gamma and epsilon chains, while a peripheral stalk is formed by the delta and b chains.

It is found in the cell inner membrane. The enzyme catalyses ATP + H2O + 4 H(+)(in) = ADP + phosphate + 5 H(+)(out). Functionally, produces ATP from ADP in the presence of a proton gradient across the membrane. The catalytic sites are hosted primarily by the beta subunits. This Alteromonas mediterranea (strain DSM 17117 / CIP 110805 / LMG 28347 / Deep ecotype) protein is ATP synthase subunit beta.